The chain runs to 581 residues: Protein GAMETOPHYTE DEFECTIVE 1 (581 aa).

Residues 452 to 467 (SMNIESTSEGGSMSPS) show a composition bias toward polar residues. Residues 452–512 (SMNIESTSEG…TTGHASNDEM (61 aa)) form a disordered region. Over residues 496–512 (ENSKERATTGHASNDEM) the composition is skewed to basic and acidic residues.

This sequence belongs to the eukaryotic/archaeal RNase P protein component 3 family. Probable component of nuclear RNase P and RNase MRP ribonucleoproteins. Interacts with POP5. Mostly expressed in inflorescence and roots, to a lower extent in leaves, and, at low levels, in siliques, seedlings and stems.

The protein resides in the nucleus. Its subcellular location is the nucleolus. It localises to the mitochondrion. In terms of biological role, probable component of ribonuclease P, a ribonucleoprotein complex that generates mature tRNA molecules by cleaving their 5'-ends. May also be a component of the MRP ribonuclease complex, which cleaves pre-rRNA sequences. Required for female gametophyte development and male competence. The polypeptide is Protein GAMETOPHYTE DEFECTIVE 1 (Arabidopsis thaliana (Mouse-ear cress)).